The following is a 447-amino-acid chain: Tubulin beta chain (447 aa).

8 residues coordinate GTP: Q11, E69, S138, G142, T143, G144, N204, and N226. E69 contacts Mg(2+). Residues 421–447 form a disordered region; it reads EYQQYQDASISEGEEEYEEEAPMEPEE. The span at 432-447 shows a compositional bias: acidic residues; it reads EGEEEYEEEAPMEPEE.

This sequence belongs to the tubulin family. Dimer of alpha and beta chains. A typical microtubule is a hollow water-filled tube with an outer diameter of 25 nm and an inner diameter of 15 nM. Alpha-beta heterodimers associate head-to-tail to form protofilaments running lengthwise along the microtubule wall with the beta-tubulin subunit facing the microtubule plus end conferring a structural polarity. Microtubules usually have 13 protofilaments but different protofilament numbers can be found in some organisms and specialized cells. It depends on Mg(2+) as a cofactor.

Its subcellular location is the cytoplasm. The protein resides in the cytoskeleton. Tubulin is the major constituent of microtubules, a cylinder consisting of laterally associated linear protofilaments composed of alpha- and beta-tubulin heterodimers. Microtubules grow by the addition of GTP-tubulin dimers to the microtubule end, where a stabilizing cap forms. Below the cap, tubulin dimers are in GDP-bound state, owing to GTPase activity of alpha-tubulin. In Rhynchosporium secalis (Barley scald fungus), this protein is Tubulin beta chain.